We begin with the raw amino-acid sequence, 975 residues long: Probable ATP-dependent RNA helicase CG8611 (975 aa).

Residues 1–24 (MVENISLNVTVKSSARKNQQQSPA) are compositionally biased toward polar residues. 3 disordered regions span residues 1-38 (MVEN…QDFD), 50-104 (AIVV…DDLM), and 127-295 (TTKP…FRTK). The segment covering 64 to 94 (PTNSSVPNTTKSPTPSVSSSKSAISTLSASP) has biased composition (low complexity). A phosphoserine mark is found at Ser-75 and Ser-99. Residues 190 to 203 (QLEEERRQKRREEG) are compositionally biased toward basic and acidic residues. Phosphoserine occurs at positions 210, 220, and 224. Residues 242-261 (IEDSGESGEESATSDEEPDE) are compositionally biased toward acidic residues. The span at 269–285 (QEKEPKQTAKKPPKAEE) shows a compositional bias: basic and acidic residues. Residues 327–356 (SKISTLGLHPHAVKNLEDLLSIRELTSVQQ) carry the Q motif motif. One can recognise a Helicase ATP-binding domain in the interval 359 to 548 (IPEVLQGKDV…GLTLKNPLYI (190 aa)). 372–379 (SQTGSGKT) contacts ATP. Residues 485–488 (DEAD) carry the DEAD box motif. Positions 616 to 789 (LLAKEVDASP…DMYAYLQTLL (174 aa)) constitute a Helicase C-terminal domain. Position 667 is a phosphoserine (Ser-667). Disordered stretches follow at residues 915–942 (LQQR…VGRS) and 955–975 (NMSE…RKQA).

This sequence belongs to the DEAD box helicase family. DDX31/DBP7 subfamily.

It carries out the reaction ATP + H2O = ADP + phosphate + H(+). Its function is as follows. Probable ATP-dependent RNA helicase. In Drosophila melanogaster (Fruit fly), this protein is Probable ATP-dependent RNA helicase CG8611.